The primary structure comprises 240 residues: Small ribosomal subunit protein uS3 (240 aa).

One can recognise a KH type-2 domain in the interval 39–109; that stretch reads IRQYVEKNLS…QIRINVVEVA (71 aa). Positions 214 to 240 are disordered; the sequence is EEQAPAQPATTPKRQRRRQQFEDRSNE.

This sequence belongs to the universal ribosomal protein uS3 family. Part of the 30S ribosomal subunit. Forms a tight complex with proteins S10 and S14.

Its function is as follows. Binds the lower part of the 30S subunit head. Binds mRNA in the 70S ribosome, positioning it for translation. The protein is Small ribosomal subunit protein uS3 of Gloeothece citriformis (strain PCC 7424) (Cyanothece sp. (strain PCC 7424)).